A 207-amino-acid polypeptide reads, in one-letter code: Thymidylate kinase (207 aa).

Positions 11–49 are disordered; sequence EGIDGSGKSTQARRLAEHLRDTGRDPLLTREPGGSPGAE. An ATP-binding site is contributed by 12–19; sequence GIDGSGKS. Over residues 24–38 the composition is skewed to basic and acidic residues; sequence RLAEHLRDTGRDPLL.

The protein belongs to the thymidylate kinase family.

The catalysed reaction is dTMP + ATP = dTDP + ADP. In terms of biological role, phosphorylation of dTMP to form dTDP in both de novo and salvage pathways of dTTP synthesis. This Dinoroseobacter shibae (strain DSM 16493 / NCIMB 14021 / DFL 12) protein is Thymidylate kinase.